Consider the following 91-residue polypeptide: DNA-directed RNA polymerase subunit omega (91 aa).

This sequence belongs to the RNA polymerase subunit omega family. In terms of assembly, the RNAP catalytic core consists of 2 alpha, 1 beta, 1 beta' and 1 omega subunit. When a sigma factor is associated with the core the holoenzyme is formed, which can initiate transcription.

The catalysed reaction is RNA(n) + a ribonucleoside 5'-triphosphate = RNA(n+1) + diphosphate. In terms of biological role, promotes RNA polymerase assembly. Latches the N- and C-terminal regions of the beta' subunit thereby facilitating its interaction with the beta and alpha subunits. The chain is DNA-directed RNA polymerase subunit omega from Shigella flexneri.